Here is a 383-residue protein sequence, read N- to C-terminus: tRNA-specific 2-thiouridylase MnmA (383 aa).

ATP contacts are provided by residues 6 to 13 and Leu-32; that span reads AMSGGVDS. Cys-101 functions as the Nucleophile in the catalytic mechanism. Cys-101 and Cys-199 are oxidised to a cystine. Gly-125 contacts ATP. Residues 148-150 are interaction with tRNA; it reads KDQ. Cys-199 (cysteine persulfide intermediate) is an active-site residue.

The protein belongs to the MnmA/TRMU family.

Its subcellular location is the cytoplasm. The enzyme catalyses S-sulfanyl-L-cysteinyl-[protein] + uridine(34) in tRNA + AH2 + ATP = 2-thiouridine(34) in tRNA + L-cysteinyl-[protein] + A + AMP + diphosphate + H(+). Catalyzes the 2-thiolation of uridine at the wobble position (U34) of tRNA, leading to the formation of s(2)U34. The protein is tRNA-specific 2-thiouridylase MnmA of Kocuria rhizophila (strain ATCC 9341 / DSM 348 / NBRC 103217 / DC2201).